The sequence spans 185 residues: UPF0200 protein TK1334 (185 aa).

ATP is bound at residue 7-14 (GMPGSGKS).

The protein belongs to the UPF0200 family.

The protein is UPF0200 protein TK1334 of Thermococcus kodakarensis (strain ATCC BAA-918 / JCM 12380 / KOD1) (Pyrococcus kodakaraensis (strain KOD1)).